Here is a 254-residue protein sequence, read N- to C-terminus: 5-oxoprolinase subunit A (254 aa).

The protein belongs to the LamB/PxpA family. In terms of assembly, forms a complex composed of PxpA, PxpB and PxpC.

The catalysed reaction is 5-oxo-L-proline + ATP + 2 H2O = L-glutamate + ADP + phosphate + H(+). In terms of biological role, catalyzes the cleavage of 5-oxoproline to form L-glutamate coupled to the hydrolysis of ATP to ADP and inorganic phosphate. The polypeptide is 5-oxoprolinase subunit A (Acinetobacter baylyi (strain ATCC 33305 / BD413 / ADP1)).